A 334-amino-acid polypeptide reads, in one-letter code: 4-hydroxyproline 2-epimerase (334 aa).

The active-site Proton acceptor is the cysteine 90. Substrate contacts are provided by residues glycine 91–histidine 92, histidine 223, and aspartate 249. The active-site Proton donor is the cysteine 253. Residue glycine 254–threonine 255 participates in substrate binding.

It belongs to the proline racemase family. As to quaternary structure, homodimer.

It carries out the reaction trans-4-hydroxy-L-proline = cis-4-hydroxy-D-proline. Catalyzes the epimerization of trans-4-hydroxy-L-proline (t4LHyp) to cis-4-hydroxy-D-proline (c4DHyp). Is likely involved in a degradation pathway that converts t4LHyp to alpha-ketoglutarate, which would allow P.denitrificans to grow on t4LHyp as a sole carbon source. Also seems to be involved in an alternative catabolic pathway that degrades trans-4-hydroxy-L-proline betaine (tHyp-B) to alpha-ketoglutarate; this pathway would permit the utilization of tHyp-B as a sole carbon and nitrogen source. The polypeptide is 4-hydroxyproline 2-epimerase (hypF) (Paracoccus denitrificans (strain Pd 1222)).